The sequence spans 648 residues: SRSF protein kinase 1 (648 aa).

The segment at 1-57 (MERKVLALQARKKRTKAKKDKAQRKPETQHRGSAPHSESDIPEQEEEILGSDDDEQE) is disordered. A compositionally biased stretch (basic residues) spans 10–22 (ARKKRTKAKKDKA). The span at 40–57 (DIPEQEEEILGSDDDEQE) shows a compositional bias: acidic residues. S51 is subject to Phosphoserine. Residues 80-646 (YHVIRKLGWG…AAECLRHPWL (567 aa)) form the Protein kinase domain. Residues 86 to 94 (LGWGHFSTV) and K109 each bind ATP. The active-site Proton acceptor is the D213. 2 disordered regions span residues 238–354 (WQRS…APEI) and 395–464 (PSFL…DSKG). The segment covering 265-276 (KNKKKKLKKKQK) has biased composition (basic residues). 2 stretches are compositionally biased toward basic and acidic residues: residues 277-288 (RQAELLEKRMQE) and 304-317 (NKQE…DRPL). Phosphoserine occurs at positions 309, 311, and 333. Polar residues-rich tracts occupy residues 333-343 (SNSIGQDQTLT) and 396-441 (SFLN…TQLE). T448 is modified (phosphothreonine). At S450 the chain carries Phosphoserine. At S548 the chain carries Phosphoserine; by CK2.

The protein belongs to the protein kinase superfamily. CMGC Ser/Thr protein kinase family. Monomer. Found in a multisubunit complex containing seven proteins, named toposome, which separates entangled circular chromatin DNA during chromosome segregation. Interacts with HHV-1 ICP27 protein. Interacts with DNAJC8 and AHSA1/AHA1 and this mediates formation of a complex with the Hsp70 /Hsp90 machinery. Binds to IGF2BP1, SYNCRIP, HNRNPA2B1 and HNRNPC. Interacts with SAFB/SAFB1 and SAFB2 which inhibits its activity. Mg(2+) is required as a cofactor. Predominantly expressed in the testis but is also present at lower levels in heart, spleen, liver, brain, kidney, lung and skeletal muscle. Present in all germinal cells in the seminiferous tubules but not in mature spermatozoa.

The protein resides in the cytoplasm. It is found in the nucleus. It localises to the nucleoplasm. The protein localises to the nucleus matrix. Its subcellular location is the microsome. The protein resides in the nucleus speckle. It is found in the chromosome. The catalysed reaction is L-seryl-[protein] + ATP = O-phospho-L-seryl-[protein] + ADP + H(+). It catalyses the reaction L-threonyl-[protein] + ATP = O-phospho-L-threonyl-[protein] + ADP + H(+). Its activity is regulated as follows. Activated by phosphorylation on Ser-51 and Ser-548. Serine/arginine-rich protein-specific kinase which specifically phosphorylates its substrates at serine residues located in regions rich in arginine/serine dipeptides, known as RS domains and is involved in the phosphorylation of SR splicing factors and the regulation of splicing. Plays a central role in the regulatory network for splicing, controlling the intranuclear distribution of splicing factors in interphase cells and the reorganization of nuclear speckles during mitosis. Can influence additional steps of mRNA maturation, as well as other cellular activities, such as chromatin reorganization in somatic and sperm cells and cell cycle progression. Phosphorylates SFRS2, ZRSR2, LBR and PRM1. Phosphorylates SRSF1 using a directional (C-terminal to N-terminal) and a dual-track mechanism incorporating both processive phosphorylation (in which the kinase stays attached to the substrate after each round of phosphorylation) and distributive phosphorylation steps (in which the kinase and substrate dissociate after each phosphorylation event). The RS domain of SRSF1 binds first to a docking groove in the large lobe of the kinase domain of SRPK1. This induces certain structural changes in SRPK1 and/or RRM2 domain of SRSF1, allowing RRM2 to bind the kinase and initiate phosphorylation. The cycles continue for several phosphorylation steps in a processive manner (steps 1-8) until the last few phosphorylation steps (approximately steps 9-12). During that time, a mechanical stress induces the unfolding of the beta-4 motif in RRM2, which then docks at the docking groove of SRPK1. This also signals RRM2 to begin to dissociate, which facilitates SRSF1 dissociation after phosphorylation is completed. Can mediate hepatitis B virus (HBV) core protein phosphorylation. It plays a negative role in the regulation of HBV replication through a mechanism not involving the phosphorylation of the core protein but by reducing the packaging efficiency of the pregenomic RNA (pgRNA) without affecting the formation of the viral core particles. Can induce splicing of exon 10 in MAPT/TAU. This is SRSF protein kinase 1 from Mus musculus (Mouse).